A 569-amino-acid chain; its full sequence is MAELEAVADDLDALIDDLDYLPGHFHLEMQLNFEPRSPAPQRARDLKLQREGLRQELQLAAAPQRPAVRHLLGAFAFYLEELDEARECFLEVAHEHPGNLNAWANLAHVYGRLGQEEEEEACAARLADLMGLAEEPEAAGDPQLRAARCLAEQGYAHGFDVGCASPEERARGLAAGIALYDKALGYGQQIPMEEKRGWYFTMATLYIRLDGIFLELGSEEQKRLPAFNRTLALLRQVLKSEDPRHRALAWCYLGMLLERKDTFSTTPMGVHDCGYSGTDPLDCFGKAIEIAKNQPPILNRLAKIFYFLGKQDMAIGTCNMALDVLRDPELNWQAYCTRAKIHIRAYLHDLKRAKMGLGGMPDRNHLACAKADLEEVVRVCPGFKAYLDIGQVYYYMGVDAVQELLAVDEAALNQALVFLAKAGESELGATLPELQLLRGKCLRIKGEDANAAACFKRAVELDDAGSSHTDGFGCLLEALLAQWSQAQLSDGELGREVDAWLRRAQDKYPAARLRQELQRVWRGHTDEVLGLARALVAQGRPALVRLLFETMEREGEGASAPRDRRAVSF.

7 TPR repeats span residues 66-99, 101-133, 203-237, 260-294, 295-328, 383-418, and 432-465; these read PAVR…HPGN, NAWA…MGLA, ATLY…LRQV, KDTF…AKNQ, PPIL…LRDP, FKAY…ALVF, and PELQ…DDAG.

The polypeptide is Tetratricopeptide repeat protein 22 (TTC22) (Homo sapiens (Human)).